We begin with the raw amino-acid sequence, 566 residues long: Good for full DBP5 activity protein 2 (566 aa).

Polar residues predominate over residues 1 to 16 (MQVQKMVRDNSNNGSD). The segment at 1 to 41 (MQVQKMVRDNSNNGSDKSVHWERRNNNGAGPRYRSRSGNTG) is disordered.

In terms of biological role, high-copy suppressor of DBP5 mutation. This is Good for full DBP5 activity protein 2 (GFD2) from Saccharomyces cerevisiae (strain ATCC 204508 / S288c) (Baker's yeast).